We begin with the raw amino-acid sequence, 275 residues long: Tryptophan synthase alpha chain (275 aa).

Active-site proton acceptor residues include Glu49 and Asp60.

Belongs to the TrpA family. As to quaternary structure, tetramer of two alpha and two beta chains.

The enzyme catalyses (1S,2R)-1-C-(indol-3-yl)glycerol 3-phosphate + L-serine = D-glyceraldehyde 3-phosphate + L-tryptophan + H2O. The protein operates within amino-acid biosynthesis; L-tryptophan biosynthesis; L-tryptophan from chorismate: step 5/5. In terms of biological role, the alpha subunit is responsible for the aldol cleavage of indoleglycerol phosphate to indole and glyceraldehyde 3-phosphate. The chain is Tryptophan synthase alpha chain from Nitrosomonas europaea (strain ATCC 19718 / CIP 103999 / KCTC 2705 / NBRC 14298).